The sequence spans 351 residues: Cytoplasmic dynein 2 light intermediate chain 1 (351 aa).

The interval 304–351 is disordered; the sequence is TLKDVKDPAKDPQYAESEVDEMRIQKDQELEQYKRSSSKSWKQIELDS. Over residues 323–337 the composition is skewed to basic and acidic residues; that stretch reads DEMRIQKDQELEQYK.

This sequence belongs to the dynein light intermediate chain family. Light intermediate chain of the cytoplasmic dynein complex 2, a multisubunit complex composed at least of eleven different proteins. The cytoplasmic dynein 2 complex consists of two catalytic heavy chains (HCs) and a number of non-catalytic subunits presented by intermediate chains (ICs), light intermediate chains (LICs) and light chains (LCs). Among them, a heavy chain (DYNC2H1), two intermediate chains (DYNC2I2 and DYNC2I1), a light intermediate chain (DYNC2LI1), and a light chain (DYNLT2B) are unique to the dynein-2 complex, but a subset of light chains are also shared by dynein-1 and dynein-2 complexes. Dynein-2 complex is built around two copies of cytoplasmic dynein 2 heavy chain 1 (DYNC2H1). The C-terminal region forms the motor domain, which converts the energy from ATP hydrolysis into movement. Its N-terminal region forms the tail, an extended structure that binds the other subunits and holds the two heavy chains in a homodimer. Interacts with DYNC2H1 (via N-terminus); this interaction stabilizes the dynein-2 complex structure.

It is found in the cytoplasm. It localises to the cell projection. The protein localises to the cilium. Its subcellular location is the cytoskeleton. The protein resides in the cilium basal body. It is found in the cilium axoneme. It localises to the microtubule organizing center. The protein localises to the centrosome. Its function is as follows. Acts as one of several non-catalytic accessory components of the cytoplasmic dynein 2 complex (dynein-2 complex), a motor protein complex that drives the movement of cargos along microtubules within cilia and flagella in concert with the intraflagellar transport (IFT) system, facilitating the assembly of these organelles. Involved in the regulation of ciliary length. The chain is Cytoplasmic dynein 2 light intermediate chain 1 (DYNC2LI1) from Bos taurus (Bovine).